A 78-amino-acid chain; its full sequence is Large ribosomal subunit protein bL28 (78 aa).

Belongs to the bacterial ribosomal protein bL28 family.

The polypeptide is Large ribosomal subunit protein bL28 (Leifsonia xyli subsp. xyli (strain CTCB07)).